The sequence spans 150 residues: Large ribosomal subunit protein bL9 (150 aa).

The protein belongs to the bacterial ribosomal protein bL9 family.

Binds to the 23S rRNA. This Erwinia tasmaniensis (strain DSM 17950 / CFBP 7177 / CIP 109463 / NCPPB 4357 / Et1/99) protein is Large ribosomal subunit protein bL9.